A 915-amino-acid chain; its full sequence is Alanine--tRNA ligase (915 aa).

Zn(2+) is bound by residues H605, H609, C709, and H713. The tract at residues 882-901 (GGGGDERLAQGGGRNPDGLT) is disordered.

The protein belongs to the class-II aminoacyl-tRNA synthetase family. The cofactor is Zn(2+).

It is found in the cytoplasm. The enzyme catalyses tRNA(Ala) + L-alanine + ATP = L-alanyl-tRNA(Ala) + AMP + diphosphate. Functionally, catalyzes the attachment of alanine to tRNA(Ala) in a two-step reaction: alanine is first activated by ATP to form Ala-AMP and then transferred to the acceptor end of tRNA(Ala). Also edits incorrectly charged Ser-tRNA(Ala) and Gly-tRNA(Ala) via its editing domain. The protein is Alanine--tRNA ligase of Methanopyrus kandleri (strain AV19 / DSM 6324 / JCM 9639 / NBRC 100938).